Consider the following 251-residue polypeptide: Triosephosphate isomerase (251 aa).

9 to 11 (NWK) is a binding site for substrate. The active-site Electrophile is histidine 95. The active-site Proton acceptor is the glutamate 167. Substrate is bound by residues glycine 173, serine 212, and 233-234 (GG).

The protein belongs to the triosephosphate isomerase family. In terms of assembly, homodimer.

The protein resides in the cytoplasm. It carries out the reaction D-glyceraldehyde 3-phosphate = dihydroxyacetone phosphate. It participates in carbohydrate biosynthesis; gluconeogenesis. The protein operates within carbohydrate degradation; glycolysis; D-glyceraldehyde 3-phosphate from glycerone phosphate: step 1/1. Its function is as follows. Involved in the gluconeogenesis. Catalyzes stereospecifically the conversion of dihydroxyacetone phosphate (DHAP) to D-glyceraldehyde-3-phosphate (G3P). The sequence is that of Triosephosphate isomerase from Pseudomonas aeruginosa (strain LESB58).